The sequence spans 332 residues: NADH-quinone oxidoreductase subunit H (332 aa).

Helical transmembrane passes span 16–36 (VFFG…TYAI), 87–107 (YVLA…ALPF), 116–136 (IGVG…GVVT), 164–184 (LVMS…VDIV), 190–210 (VWFI…AVAE), 231–251 (VEYS…YLFA), 253–273 (AALI…LGWI), 277–297 (VWFA…RATF), and 312–332 (VLLP…SLFF).

This sequence belongs to the complex I subunit 1 family. NDH-1 is composed of 14 different subunits. Subunits NuoA, H, J, K, L, M, N constitute the membrane sector of the complex.

The protein localises to the cell membrane. It carries out the reaction a quinone + NADH + 5 H(+)(in) = a quinol + NAD(+) + 4 H(+)(out). NDH-1 shuttles electrons from NADH, via FMN and iron-sulfur (Fe-S) centers, to quinones in the respiratory chain. The immediate electron acceptor for the enzyme in this species is believed to be ubiquinone. Couples the redox reaction to proton translocation (for every two electrons transferred, four hydrogen ions are translocated across the cytoplasmic membrane), and thus conserves the redox energy in a proton gradient. This subunit may bind ubiquinone. This chain is NADH-quinone oxidoreductase subunit H, found in Geobacillus thermodenitrificans (strain NG80-2).